The chain runs to 434 residues: Bifunctional protein GlmU (434 aa).

Residues 1 to 226 are pyrophosphorylase; the sequence is MNKNKISIVI…ENEYKGVNSK (226 aa). Residues 11-14, lysine 25, glutamine 77, and 84-85 each bind UDP-N-acetyl-alpha-D-glucosamine; these read LAAG and GT. Residue aspartate 105 coordinates Mg(2+). 4 residues coordinate UDP-N-acetyl-alpha-D-glucosamine: glycine 138, glutamate 152, asparagine 167, and asparagine 224. Residue asparagine 224 participates in Mg(2+) binding. The segment at 227-247 is linker; that stretch reads KDLSDAEIIMQDKIKNSLMES. Positions 248–434 are N-acetyltransferase; the sequence is GVTMQLPSTI…DFYYKFFAKK (187 aa). 2 residues coordinate UDP-N-acetyl-alpha-D-glucosamine: arginine 311 and lysine 328. Histidine 339 serves as the catalytic Proton acceptor. UDP-N-acetyl-alpha-D-glucosamine is bound by residues tyrosine 342 and asparagine 353. Acetyl-CoA is bound by residues alanine 356, 362 to 363, serine 381, and alanine 399; that span reads NY.

In the N-terminal section; belongs to the N-acetylglucosamine-1-phosphate uridyltransferase family. This sequence in the C-terminal section; belongs to the transferase hexapeptide repeat family. Homotrimer. Mg(2+) is required as a cofactor.

The protein resides in the cytoplasm. The catalysed reaction is alpha-D-glucosamine 1-phosphate + acetyl-CoA = N-acetyl-alpha-D-glucosamine 1-phosphate + CoA + H(+). It carries out the reaction N-acetyl-alpha-D-glucosamine 1-phosphate + UTP + H(+) = UDP-N-acetyl-alpha-D-glucosamine + diphosphate. It functions in the pathway nucleotide-sugar biosynthesis; UDP-N-acetyl-alpha-D-glucosamine biosynthesis; N-acetyl-alpha-D-glucosamine 1-phosphate from alpha-D-glucosamine 6-phosphate (route II): step 2/2. Its pathway is nucleotide-sugar biosynthesis; UDP-N-acetyl-alpha-D-glucosamine biosynthesis; UDP-N-acetyl-alpha-D-glucosamine from N-acetyl-alpha-D-glucosamine 1-phosphate: step 1/1. The protein operates within bacterial outer membrane biogenesis; LPS lipid A biosynthesis. In terms of biological role, catalyzes the last two sequential reactions in the de novo biosynthetic pathway for UDP-N-acetylglucosamine (UDP-GlcNAc). The C-terminal domain catalyzes the transfer of acetyl group from acetyl coenzyme A to glucosamine-1-phosphate (GlcN-1-P) to produce N-acetylglucosamine-1-phosphate (GlcNAc-1-P), which is converted into UDP-GlcNAc by the transfer of uridine 5-monophosphate (from uridine 5-triphosphate), a reaction catalyzed by the N-terminal domain. The protein is Bifunctional protein GlmU of Sulfurimonas denitrificans (strain ATCC 33889 / DSM 1251) (Thiomicrospira denitrificans (strain ATCC 33889 / DSM 1251)).